We begin with the raw amino-acid sequence, 114 residues long: Small nuclear ribonucleoprotein SmD1a (114 aa).

In terms of domain architecture, Sm spans 2-74 (KLVRFLMKLN…IRYYILPDSL (73 aa)). Positions 87 to 114 (VKPKKPVAGKAVGRGRGRGRGRGRGRGR) are disordered. A run of 8 repeats spans residues 99 to 100 (GR), 101 to 102 (GR), 103 to 104 (GR), 105 to 106 (GR), 107 to 108 (GR), 109 to 110 (GR), 111 to 112 (GR), and 113 to 114 (GR). The segment at 99-114 (GRGRGRGRGRGRGRGR) is 8 X 2 AA tandem repeats of G-R.

This sequence belongs to the snRNP core protein family.

The protein localises to the nucleus. The protein resides in the nucleus speckle. Its subcellular location is the nucleolus. Its function is as follows. Involved in splicing regulation. Facilitates post-transcriptional gene silencing (PTGS) by limiting the degradation of transgene aberrant RNAs by the RNA quality control (RQC) machinery, thus favoring their entry into cytoplasmic siRNA bodies where they can trigger PTGS. Does not participate in the production of small RNAs. This Arabidopsis thaliana (Mouse-ear cress) protein is Small nuclear ribonucleoprotein SmD1a.